A 390-amino-acid chain; its full sequence is 1-deoxy-D-xylulose 5-phosphate reductoisomerase (390 aa).

8 residues coordinate NADPH: Thr-10, Gly-11, Ser-12, Ile-13, Ala-36, Lys-37, Asn-38, and Asn-122. Lys-123 lines the 1-deoxy-D-xylulose 5-phosphate pocket. Glu-124 serves as a coordination point for NADPH. Asp-148 contacts Mn(2+). Residues Ser-149, Glu-150, Ser-174, and His-197 each coordinate 1-deoxy-D-xylulose 5-phosphate. Residue Glu-150 participates in Mn(2+) binding. Gly-203 is a binding site for NADPH. 1-deoxy-D-xylulose 5-phosphate is bound by residues Ser-210, Asn-215, Lys-216, and Glu-219. Glu-219 serves as a coordination point for Mn(2+).

This sequence belongs to the DXR family. The cofactor is Mg(2+). It depends on Mn(2+) as a cofactor.

It catalyses the reaction 2-C-methyl-D-erythritol 4-phosphate + NADP(+) = 1-deoxy-D-xylulose 5-phosphate + NADPH + H(+). The protein operates within isoprenoid biosynthesis; isopentenyl diphosphate biosynthesis via DXP pathway; isopentenyl diphosphate from 1-deoxy-D-xylulose 5-phosphate: step 1/6. Its function is as follows. Catalyzes the NADPH-dependent rearrangement and reduction of 1-deoxy-D-xylulose-5-phosphate (DXP) to 2-C-methyl-D-erythritol 4-phosphate (MEP). In Trichlorobacter lovleyi (strain ATCC BAA-1151 / DSM 17278 / SZ) (Geobacter lovleyi), this protein is 1-deoxy-D-xylulose 5-phosphate reductoisomerase.